The sequence spans 484 residues: Zinc metalloproteinase/disintegrin PMMP-2 (484 aa).

The first 20 residues, 1 to 20, serve as a signal peptide directing secretion; sequence MIQVLLVTICLAVFPYQGSS. A propeptide spanning residues 21 to 190 is cleaved from the precursor; it reads IILESGNVDD…KASQLNLTPL (170 aa). In terms of domain architecture, Peptidase M12B spans 197 to 395; the sequence is RYVKLAIVVD…YNPQCILNAP (199 aa). A glycan (N-linked (GlcNAc...) asparagine) is linked at Asn239. Cystine bridges form between Cys308/Cys390, Cys352/Cys374, and Cys354/Cys357. His333 serves as a coordination point for Zn(2+). The active site involves Glu334. Residues His337 and His343 each coordinate Zn(2+). The propeptide occupies 396-413; it reads LRTDTVSTPVSGNEFLEA. The Disintegrin domain maps to 403–484; it reads TPVSGNEFLE…ADCPRNGLYG (82 aa). 6 disulfides stabilise this stretch: Cys417/Cys432, Cys419/Cys427, Cys426/Cys449, Cys440/Cys446, Cys445/Cys470, and Cys458/Cys477. The Cell attachment site motif lies at 462 to 464; that stretch reads RGD.

Belongs to the venom metalloproteinase (M12B) family. P-II subfamily. P-IIa sub-subfamily. Monomer. Requires Zn(2+) as cofactor. In terms of tissue distribution, expressed by the venom gland.

The protein localises to the secreted. In terms of biological role, impairs hemostasis in the envenomed animal. Inhibits platelet aggregation induced by ADP, thrombin, platelet-activating factor and collagen. Acts by inhibiting fibrinogen interaction with platelet receptors GPIIb/GPIIIa (ITGA2B/ITGB3). This Protobothrops mucrosquamatus (Taiwan habu) protein is Zinc metalloproteinase/disintegrin PMMP-2.